A 350-amino-acid polypeptide reads, in one-letter code: Nicotinate-nucleotide--dimethylbenzimidazole phosphoribosyltransferase (350 aa).

E317 functions as the Proton acceptor in the catalytic mechanism.

This sequence belongs to the CobT family.

It carries out the reaction 5,6-dimethylbenzimidazole + nicotinate beta-D-ribonucleotide = alpha-ribazole 5'-phosphate + nicotinate + H(+). Its pathway is nucleoside biosynthesis; alpha-ribazole biosynthesis; alpha-ribazole from 5,6-dimethylbenzimidazole: step 1/2. Its function is as follows. Catalyzes the synthesis of alpha-ribazole-5'-phosphate from nicotinate mononucleotide (NAMN) and 5,6-dimethylbenzimidazole (DMB). This chain is Nicotinate-nucleotide--dimethylbenzimidazole phosphoribosyltransferase, found in Shewanella sp. (strain MR-4).